The following is a 103-amino-acid chain: Small ribosomal subunit protein uS10 (103 aa).

Belongs to the universal ribosomal protein uS10 family. Part of the 30S ribosomal subunit.

Involved in the binding of tRNA to the ribosomes. The sequence is that of Small ribosomal subunit protein uS10 from Bordetella parapertussis (strain 12822 / ATCC BAA-587 / NCTC 13253).